A 377-amino-acid polypeptide reads, in one-letter code: Queuine tRNA-ribosyltransferase (377 aa).

The active-site Proton acceptor is Asp91. Substrate is bound by residues 91–95, Asp145, Gln189, and Gly216; that span reads DSGGF. The tract at residues 247 to 253 is RNA binding; the sequence is GVGKPED. Asp266 serves as the catalytic Nucleophile. Residues 271–275 are RNA binding; important for wobble base 34 recognition; it reads TRNAR. The Zn(2+) site is built by Cys304, Cys306, Cys309, and His335.

It belongs to the queuine tRNA-ribosyltransferase family. Homodimer. Within each dimer, one monomer is responsible for RNA recognition and catalysis, while the other monomer binds to the replacement base PreQ1. Zn(2+) serves as cofactor.

It carries out the reaction 7-aminomethyl-7-carbaguanine + guanosine(34) in tRNA = 7-aminomethyl-7-carbaguanosine(34) in tRNA + guanine. The protein operates within tRNA modification; tRNA-queuosine biosynthesis. Functionally, catalyzes the base-exchange of a guanine (G) residue with the queuine precursor 7-aminomethyl-7-deazaguanine (PreQ1) at position 34 (anticodon wobble position) in tRNAs with GU(N) anticodons (tRNA-Asp, -Asn, -His and -Tyr). Catalysis occurs through a double-displacement mechanism. The nucleophile active site attacks the C1' of nucleotide 34 to detach the guanine base from the RNA, forming a covalent enzyme-RNA intermediate. The proton acceptor active site deprotonates the incoming PreQ1, allowing a nucleophilic attack on the C1' of the ribose to form the product. After dissociation, two additional enzymatic reactions on the tRNA convert PreQ1 to queuine (Q), resulting in the hypermodified nucleoside queuosine (7-(((4,5-cis-dihydroxy-2-cyclopenten-1-yl)amino)methyl)-7-deazaguanosine). This Vibrio parahaemolyticus serotype O3:K6 (strain RIMD 2210633) protein is Queuine tRNA-ribosyltransferase.